Consider the following 301-residue polypeptide: Rhodopsin (301 aa).

The Extracellular segment spans residues 1–18 (LHMIHLHWYQYPPMNPMM). Residues 19–43 (YPLLLIFMLFTGILCLAGNFVTIWV) form a helical membrane-spanning segment. Over 44–55 (FMNTKSLRTPAN) the chain is Cytoplasmic. Residues 56-78 (LLVVNLAMSDFLMMFTMFPPMMV) traverse the membrane as a helical segment. The Extracellular segment spans residues 79-92 (TCYYHTWTLGPTFC). An intrachain disulfide couples C92 to C169. Residues 93-115 (QVYGFLGNLCGCASIWTMVFITF) form a helical membrane-spanning segment. Positions 116-118 (DRY) match the 'Ionic lock' involved in activated form stabilization motif. The Cytoplasmic portion of the chain corresponds to 116-134 (DRYNVIVKGVAGEPLSTKK). Residues 135–155 (ASLWILIVWVLSLAWCMAPFF) form a helical membrane-spanning segment. Residues 156 to 182 (GWNRYVPEGNLTGCGTDYLSEDILSRS) lie on the Extracellular side of the membrane. N165 is a glycosylation site (N-linked (GlcNAc...) asparagine). The chain crosses the membrane as a helical span at residues 183-204 (YLYIYSTWVYFLPLTITIYCYV). Topologically, residues 205–245 (FIIKAVAAHEKGMRDQAKKMGIKSLRNEEAQKTSAECRLAK) are cytoplasmic. A helical membrane pass occupies residues 246–267 (IAMTTVALWFIAWTPYLLINWV). Topologically, residues 268-278 (GMFARSYLSPV) are extracellular. Residues 279–300 (YTIWGYVFAKANAVYNPIVYAI) form a helical membrane-spanning segment. K288 is modified (N6-(retinylidene)lysine).

Belongs to the G-protein coupled receptor 1 family. Opsin subfamily. In terms of assembly, homodimer. Interacts with GNAQ. Post-translationally, contains one covalently linked retinal chromophore.

It is found in the cell projection. It localises to the rhabdomere membrane. Functionally, photoreceptor required for image-forming vision at low light intensity. Can use both retinal and 3-dehydroretinal as visual pigment. Light-induced isomerization of 11-cis to all-trans retinal triggers a conformational change that activates signaling via G-proteins. Signaling via GNAQ probably mediates the activation of phospholipase C. The sequence is that of Rhodopsin (RHO) from Procambarus milleri (Miami cave crayfish).